The primary structure comprises 416 residues: Phakinin (416 aa).

A disordered region spans residues 1–48 (MSERRVAMDLPSGSNASMPLQRHRVSSLRGTRSPSSLDSPPASRTSAV). Position 2 is an N-acetylserine (S2). A head region spans residues 2–115 (SERRVAMDLP…HATAEDLGGC (114 aa)). Phosphoserine is present on residues S27, S33, S36, and S91. Positions 28 to 48 (LRGTRSPSSLDSPPASRTSAV) are enriched in polar residues. The IF rod domain occupies 105 to 416 (NHATAEDLGG…HALLDREESN (312 aa)). Coiled coils occupy residues 199-240 (FRKA…SLSR) and 314-391 (LAAA…ERAH). A tail region spans residues 397–416 (GQLQKDVASYHALLDREESN).

It belongs to the intermediate filament family. In terms of assembly, part of a complex required for lens intermediate filament formation composed of BFSP1, BFSP2, and CRYAA. Found in a complex composed of PPL (via C-terminal linker domain), BFSP1 and BFSP2 in the retinal lens. Within the complex interacts with PPL (via C-terminal linker domain) and with BFSP1. Identified in a complex that contains VIM, EZR, AHNAK, BFSP1, BFSP2, ANK2, PLEC, PRX and spectrin. Interacts with LGSN. Interacts with VIM. In terms of tissue distribution, expressed in the deep and shallow cortices of the retina lens (at protein level).

It localises to the cell membrane. The protein localises to the cytoplasm. It is found in the cytoskeleton. Its subcellular location is the cell cortex. In terms of biological role, required for the correct formation of lens intermediate filaments as part of a complex composed of BFSP1, BFSP2 and CRYAA. Plays a role in maintenance of retinal lens optical clarity. The sequence is that of Phakinin from Rattus norvegicus (Rat).